The chain runs to 156 residues: Protein GLUTAMINE DUMPER 4 (156 aa).

Topologically, residues 1-39 (MRPLSIKPTSLDVARHATSVESFGNHRPPISPWHSPVPY) are extracellular. Residues 40-60 (LFGGLAAMLGLIAFALLILAC) traverse the membrane as a helical segment. Topologically, residues 61-156 (SYWRLSTSGD…AKENEETTSQ (96 aa)) are cytoplasmic. The segment at 67–87 (TSGDDSGERVDEEKESRSGVK) is disordered. Positions 72-84 (SGERVDEEKESRS) are enriched in basic and acidic residues. The short motif at 99 to 103 (VIMAG) is the VIMAG element. Residues 136 to 156 (AGEEKMGDREKAKENEETTSQ) are disordered.

This sequence belongs to the GLUTAMINE DUMPER 1 (TC 9.B.60) family. In terms of tissue distribution, expressed in the vascular tissues, even in the minor veins of the leaves.

It is found in the membrane. Its function is as follows. Probable subunit of an amino acid transporter involved in the regulation of the amino acid metabolism. Stimulates amino acid export by activating nonselective amino acid facilitators. In Arabidopsis thaliana (Mouse-ear cress), this protein is Protein GLUTAMINE DUMPER 4 (GDU4).